The following is a 399-amino-acid chain: Elongation factor Tu (399 aa).

Residues 10–204 enclose the tr-type G domain; it reads KPHVNIGTIG…AVDASIPEPE (195 aa). A G1 region spans residues 19-26; that stretch reads GHVDHGKT. Residue 19–26 coordinates GTP; the sequence is GHVDHGKT. Thr-26 is a binding site for Mg(2+). The interval 60–64 is G2; the sequence is GITIN. The segment at 81 to 84 is G3; that stretch reads DCPG. GTP contacts are provided by residues 81-85 and 136-139; these read DCPGH and NKCD. Residues 136-139 are G4; it reads NKCD. A G5 region spans residues 174-176; it reads SGL.

The protein belongs to the TRAFAC class translation factor GTPase superfamily. Classic translation factor GTPase family. EF-Tu/EF-1A subfamily. In terms of assembly, monomer.

It localises to the cytoplasm. The enzyme catalyses GTP + H2O = GDP + phosphate + H(+). Its function is as follows. GTP hydrolase that promotes the GTP-dependent binding of aminoacyl-tRNA to the A-site of ribosomes during protein biosynthesis. This Prochlorococcus marinus (strain MIT 9515) protein is Elongation factor Tu.